The primary structure comprises 156 residues: Protein-export protein SecB (156 aa).

Belongs to the SecB family. In terms of assembly, homotetramer, a dimer of dimers. One homotetramer interacts with 1 SecA dimer.

It is found in the cytoplasm. Functionally, one of the proteins required for the normal export of preproteins out of the cell cytoplasm. It is a molecular chaperone that binds to a subset of precursor proteins, maintaining them in a translocation-competent state. It also specifically binds to its receptor SecA. This chain is Protein-export protein SecB, found in Desulfotalea psychrophila (strain LSv54 / DSM 12343).